Here is a 947-residue protein sequence, read N- to C-terminus: Protocadherin alpha-4 (947 aa).

Positions 1-29 (MEFSWGSGQESQRLLLSFLLLAIWEAGNS) are cleaved as a signal peptide. Cadherin domains are found at residues 30 to 133 (QIHY…PPRF), 134 to 242 (PTTQ…APVF), 243 to 350 (DRSL…VPEL), 351 to 455 (EFKS…APVF), 456 to 565 (AQPE…APTL), and 573 to 681 (SGGI…APSR). The Extracellular segment spans residues 30–697 (QIHYSIPEEA…HSEASLVDVN (668 aa)). A disulfide bond links C96 and C102. Residues N257 and N265 are each glycosylated (N-linked (GlcNAc...) asparagine). T438 is a glycosylation site (O-linked (Man) threonine). 2 O-linked (Man) serine glycosylation sites follow: S440 and S442. An N-linked (GlcNAc...) asparagine glycan is attached at N548. Residues 698-718 (VYLIIAICAVSSLLVLTLLLY) traverse the membrane as a helical segment. The Cytoplasmic portion of the chain corresponds to 719-947 (TALRCSTVPS…GNSTTDNSDQ (229 aa)). PXXP repeat units follow at residues 734–737 (PPKP), 774–777 (PSLS), 796–799 (PRQP), 829–832 (PGGP), 870–873 (PGNP), and 888–891 (PGSP). Residues 734–891 (PPKPVMVCSS…PDKFIIPGSP (158 aa)) form a 6 X 4 AA repeats of P-X-X-P region. The required for interaction with FYN stretch occupies residues 738 to 947 (VMVCSSAVGS…GNSTTDNSDQ (210 aa)). Disordered stretches follow at residues 761-805 (GEYP…DWRY) and 824-853 (ILRAGPGGPDQQWPTVSSATPEPEAGEVSP). The tract at residues 891–947 (PAIISIRQEPANNQIDKSDFITFGKKEETKKKKKKKKGNKTQEKKEKGNSTTDNSDQ) is disordered. The span at 906–920 (DKSDFITFGKKEETK) shows a compositional bias: basic and acidic residues.

In terms of assembly, forms homodimers in trans (molecules expressed by two different cells). Forms promiscuous heterodimers in cis (at the plasma membrane of the same cell) with other protocadherins. Interacts with FYN. As to expression, detected in brain throughout embryonic development. Detected in adult brain, in particular in cerebellum and forebrain.

It localises to the cell membrane. Calcium-dependent cell-adhesion protein involved in cells self-recognition and non-self discrimination. Thereby, it is involved in the establishment and maintenance of specific neuronal connections in the brain. The chain is Protocadherin alpha-4 from Mus musculus (Mouse).